The sequence spans 681 residues: MSGSVSGCGSGGCSIVWFRRDLRVEDNPALAAAVRAGPVIALFVWAPEEEGHYHPGRVSRWWLKNSLAQLDSSLRSLGTCLITKRSTDSVASLLDVVKSTGASQIFFNHLYDPLSLVRDHRAKDVLTAQGIAVRSFNADLLYEPWEVTDELGRPFSMFAAFWERCLSMPYDPESPLLPPKKIISGDVSKCVADPLVFEDDSEKGSNALLARAWSPGWSNGDKALTTFINGPLLEYSKNRRKADSATTSFLSPHLHFGEVSVRKVFHLVRIKQVAWANEGNEAGEESVNLFLKSIGLREYSRYISFNHPYSHERPLLGHLKFFPWAVDENYFKAWRQGRTGYPLVDAGMRELWATGWLHDRIRVVVSSFFVKVLQLPWRWGMKYFWDTLLDADLESDALGWQYITGTLPDSREFDRIDNPQFEGYKFDPNGEYVRRWLPELSRLPTDWIHHPWNAPESVLQAAGIELGSNYPLPIVGLDEAKARLHEALSQMWQLEAASRAAIENGSEEGLGDSAEVEEAPIEFPRDITMEETEPTRLNPNRRYEDQMVPSITSSLIRPEEDEESSLNLRNSVGDSRAEVPRNMVNTNQAQQRRAEPASNQVTAMIPEFNIRIVAESTEDSTAESSSSGRRERSGGIVPEWSPGYSEQFPSEENGIGGGSTTSSYLQNHHEILNWRRLSQTG.

The tract at residues 1 to 489 (MSGSVSGCGS…AKARLHEALS (489 aa)) is CNT1, binds chromophores to sense blue light and mediate CRY dimerization. In terms of domain architecture, Photolyase/cryptochrome alpha/beta spans 12–141 (GCSIVWFRRD…AVRSFNADLL (130 aa)). Cys-80 and Cys-190 are joined by a disulfide. Tyr-235 contributes to the FAD binding site. Asn-238 is a binding site for Mg(2+). Residue Arg-239 participates in ATP binding. Residues Lys-241, Ser-244, and Thr-246 each coordinate Mg(2+). Residues 247 to 251 (TSFLS) and Ser-293 contribute to the FAD site. His-358 contacts Mg(2+). FAD is bound by residues Asp-359 and 390 to 392 (DAD). 359 to 360 (DR) contacts ATP. Asp-409 is an ATP binding site. The CCT1/CCE1, mediates blue light signaling stretch occupies residues 490–681 (QMWQLEAASR…LNWRRLSQTG (192 aa)). Disordered stretches follow at residues 525 to 598 (RDIT…EPAS) and 616 to 664 (STED…TSSY). The span at 583–598 (MVNTNQAQQRRAEPAS) shows a compositional bias: polar residues. Ser-616 is subject to Phosphoserine. Position 621 is a phosphothreonine (Thr-621).

It belongs to the DNA photolyase class-1 family. In terms of assembly, homodimer. Interacts with ADO1, COP1 and PHYA. Interacts specifically with the dark/far-red (Pr) state of PHYB, but not with the red light-activated (Pfr). Interacts with PIF4 and PIF5 in the nucleus in response to low blue light (LBL). Binds to SPA1 and SPA4 in response to blue light, this interaction prevents SPA1/COP1 complex formation and thus avoid COP1-dependent degradation of the transcription factor HY5 by the proteasome and promotes hypocotyl elongation. Interacts with TCP2. Binding to ATP mediates conformational changes which facilitate flavin binding. It depends on FAD as a cofactor. The cofactor is (6R)-5,10-methylene-5,6,7,8-tetrahydrofolate. Autophosphorylated; in response to blue light and when in complex with FAD cofactor. Kinase activity is optimal in the presence of magnesium ions, about 30 percent of the optimal activity in the presence of manganese ions, but inactive with calcium ions. Adopts an open conformation when phosphorylated upon photoexcitation and thus interacts with signaling partner proteins. Widely expressed. Expressed in the aerial tissues (e.g. cotyledons and leaf primordia), but not detected in the roots.

The protein resides in the cytoplasm. The protein localises to the nucleus. It is found in the PML body. Its activity is regulated as follows. Light exposure induces a conformational change in the C-terminal domain CCT1 required for activity. In terms of biological role, photoreceptor that mediates primarily blue light inhibition of hypocotyl elongation and photoperiodic control of floral initiation, and regulates other light responses, including circadian rhythms, tropic growth, stomata opening, guard cell development, root development, bacterial and viral pathogen responses, abiotic stress responses, cell cycles, programmed cell death, apical dominance, fruit and ovule development, seed dormancy, and magnetoreception. Photoexcited cryptochromes interact with signaling partner proteins to alter gene expression at both transcriptional and post-translational levels and, consequently, regulate the corresponding metabolic and developmental programs. Blue-light absorbing flavoprotein that activates reversible flavin photoreduction via an electron transport chain comprising a tryptophan triad (W-324, W-377 and W-400), accompanied by a large conformational change upon photoexcitation, or via an alternative electron transport that involves small metabolites, including NADPH, NADH, and ATP. The half-life of the activated signaling state is about 5 minutes. Also involved in the detection of blue/green ratio in light (shade under leaf canopies) and subsequent adaptations on plant growth and development. In darkness, the dark reoxidation of flavin occurs and leads to inactivated state. Perceives low blue light (LBL) and responds by directly contacting two bHLH transcription factors, PIF4 and PIF5, at chromatin on E-box variant 5'-CA[CT]GTG-3' to promote their activity and stimulate specific gene expression to adapt global physiology (e.g. hypocotyl elongation and hyponastic growth in low blue light). When activated by high-intensity blue light, catalyzes direct enzymatic conversion of molecular oxygen O(2) to reactive oxygen species (ROS) and hydrogen peroxide H(2)O(2) in vitro. ROS accumulation upon activation by blue light leads to cell death in protoplasts. Seems essential for blue-light-triggered and singlet oxygen-mediated programmed cell death (PCD). Required for the induction of nuclear genes encoding photoprotective components by GATA24 and GATA28 in extreme light intensities that exceed the electron utilization capacity of the chloroplast. Involved in shortening the circadian clock period, especially at 27 degrees Celsius, in blue light (BL) and required to maintain clock genes expression rhythm. Mediates blue light-induced gene expression and hypocotyl elongation through the inhibition of COP1-mediated degradation of the transcription factors BIT1 and HY5 and via the activation of anion channels at the plasma membrane, probably via auxin signaling. Required for the hypocotyl hook formation in darkness. Involved in blue light-dependent stomatal opening, CHS gene expression, transpiration, inhibition of stem growth and increase of root growth, probably by regulating abscisic acid (ABA). Prevents lateral roots growth by inhibiting auxin transport. Necessary for shade avoidance syndrome (SAS), characterized by leaf hyponasty and reduced lamina/petiole ratio, when exposed to blue light attenuation. Together with phototropins, involved in phototropism regulation by various blue light fluence; blue light attenuates phototropism in high fluence rates (100 umol.m-2.s-1) but enhances phototropism in low fluence rates (&lt;1.0 umol.m-2.s-1). Required for blue/UV-A wavelengths-mediated inhibition of explants shoot regeneration in vitro (e.g. new shoot apical meristems regeneration from excised cotyledons). Modulates anthocyanin accumulation in a PHYA-dependent manner in far-red-light. Acts as a PHYA/PHYB-dependent modulator of chlorophyll accumulation in red light. Contributes to most blue light deetiolation responses. May act as a chemical magnetoreceptor, via magnetically sensitive kinetics and quantum yields of photo-induced flavin / tryptophan radical pairs. The effect of near-null magnetic field on flowering is altered by changes of blue light cycle and intensity in a CRY1/CRY2-dependent manner. Involved in the strigolactone signaling that regulates hypocotyl growth in response to blue light. Modulates temperature-dependent growth and physiology maintenance, especially at warm ambient temperatures (e.g. 27 degrees Celsius) and in white light and low-light conditions, via HFR1-dependent activity; this process requires PTAC12/HMR/PAP5 (transcriptional transactivator). Implicated in promoting R protein-mediated resistance to Pseudomonas syringae pv. tomato (Pst.) DC3000 under continuous light conditions. Promotes systemic acquired resistance (SAR) and PR gene expression triggered by P.syringae. The protein is Cryptochrome-1 of Arabidopsis thaliana (Mouse-ear cress).